The primary structure comprises 394 residues: Protein NDRG1 (394 aa).

At S2 the chain carries N-acetylserine. Phosphoserine occurs at positions 2, 319, and 326. Positions 325 to 394 (RSRTASGSSV…AGPKSMEVSC (70 aa)) are disordered. Over residues 327–339 (RTASGSSVTSLDG) the composition is skewed to polar residues. T328 carries the post-translational modification Phosphothreonine; by SGK1. S330 and S332 each carry phosphoserine; by SGK1. S333 is modified (phosphoserine). T335 is modified (phosphothreonine). Position 336 is a phosphoserine (S336). 3 repeat units span residues 339–348 (GTRSRSHTSE), 349–358 (GTRSRSHTSE), and 359–368 (GTRSRSHTSE). A 3 X 10 AA tandem repeats of G-T-R-S-R-S-H-T-S-E region spans residues 339–368 (GTRSRSHTSEGTRSRSHTSEGTRSRSHTSE). T340 is subject to Phosphothreonine. A Phosphoserine modification is found at S342. Positions 345–371 (HTSEGTRSRSHTSEGTRSRSHTSEGAH) are enriched in basic and acidic residues. T346 carries the post-translational modification Phosphothreonine; by SGK1. S352 carries the phosphoserine modification. T356 is subject to Phosphothreonine; by SGK1. A Phosphoserine modification is found at S362. S364 bears the Phosphoserine; by SGK1 mark. Position 366 is a phosphothreonine; by SGK1 (T366). T375 carries the post-translational modification Phosphothreonine.

This sequence belongs to the NDRG family. Interacts with RAB4A (membrane-bound form); the interaction involves NDRG1 in vesicular recycling of CDH1. Under stress conditions, phosphorylated in the C-terminal on many serine and threonine residues. Phosphorylated in vitro by PKA. Phosphorylation enhanced by increased intracellular cAMP levels. Homocysteine induces dephosphorylation. Phosphorylation by SGK1 is cell cycle dependent. In terms of tissue distribution, ubiquitous; expressed most prominently in placental membranes and prostate, kidney, small intestine, and ovary tissues. Also expressed in heart, brain, skeletal muscle, lung, liver and pancreas. Low levels in peripheral blood leukocytes and in tissues of the immune system. Expressed mainly in epithelial cells. Also found in Schwann cells of peripheral neurons. Reduced expression in adenocarcinomas compared to normal tissues. In colon, prostate and placental membranes, the cells that border the lumen show the highest expression.

The protein localises to the cytoplasm. Its subcellular location is the cytosol. The protein resides in the cytoskeleton. It is found in the microtubule organizing center. It localises to the centrosome. The protein localises to the nucleus. Its subcellular location is the cell membrane. Its function is as follows. Stress-responsive protein involved in hormone responses, cell growth, and differentiation. Acts as a tumor suppressor in many cell types. Necessary but not sufficient for p53/TP53-mediated caspase activation and apoptosis. Has a role in cell trafficking, notably of the Schwann cell, and is necessary for the maintenance and development of the peripheral nerve myelin sheath. Required for vesicular recycling of CDH1 and TF. May also function in lipid trafficking. Protects cells from spindle disruption damage. Functions in p53/TP53-dependent mitotic spindle checkpoint. Regulates microtubule dynamics and maintains euploidy. The chain is Protein NDRG1 (NDRG1) from Homo sapiens (Human).